The chain runs to 288 residues: Methyltransferase ucsB (288 aa).

S-adenosyl-L-methionine-binding positions include Asp87 and 121–122 (DA).

It belongs to the class I-like SAM-binding methyltransferase superfamily.

It participates in mycotoxin biosynthesis. Functionally, methyltransferase; part of the gene cluster that mediates the biosynthesis of UCS1025A, a member of the pyrrolizidinone family that acts as a strong telomerase inhibitor and displays potent antibacterial and antitumor properties. These compounds share a hemiaminal-containing pyrrolizidinone core fused with a gamma-lactone, giving a furopyrrolizidine that is connected to a decalin fragment. The polyketide synthase module (PKS) of the PKS-NRPS ucsA is responsible for the synthesis of the polyketide backbone via the condensation of an acetyl-CoA starter unit with 6 malonyl-CoA units. The downstream nonribosomal peptide synthetase (NRPS) module then amidates the carboxyl end of the polyketide with a 2S,3S-methylproline derived from L-isoleucine by the 2-oxoglutarate-dependent dioxygenase ucsF which converts L-isoleucine to (4S,5S)-4-methylpyrroline-5-carboxylate that is further converted to 2S,3S-methylproline by the pyrroline-5-carboxylate reductase ucsG. Reductive release of the completed aminoacyl polyketide from the assembly line can form the 3-pyrrolin-2-one structure via an intramolecular Knoevenagel reaction. Because ucsA lacks a designated enoylreductase (ER) domain, the required activity is provided the enoyl reductase ucsL. This keto acyclic precursor is the substrate of the Diels-Alderase ucsH, that catalyzes the Diels-Alder cycloaddition. Oxidation of the 3S-methyl group to a carboxylate by the cytochrome P450 monooxygenase ucsK allows an oxa-Michael cyclization that might involve the reductase/dehydrogenase ucsI and which furnishes the furopyrrolizidine. The oxidase ucsJ likely plays a critical role in stereoselective reduction of the C5-C6 double bond to afford the required R-configured carboxylate group. Further enolization and oxidation at C5 by an unidentified enzyme affords the last intermediate that can undergo oxa-Michael cyclization to yield UCS1025A. In Acremonium sp, this protein is Methyltransferase ucsB.